The primary structure comprises 207 residues: Uridine kinase (207 aa).

11–18 (GGSGSGKT) serves as a coordination point for ATP.

It belongs to the uridine kinase family.

The protein localises to the cytoplasm. The enzyme catalyses uridine + ATP = UMP + ADP + H(+). It carries out the reaction cytidine + ATP = CMP + ADP + H(+). It participates in pyrimidine metabolism; CTP biosynthesis via salvage pathway; CTP from cytidine: step 1/3. The protein operates within pyrimidine metabolism; UMP biosynthesis via salvage pathway; UMP from uridine: step 1/1. In Staphylococcus epidermidis (strain ATCC 35984 / DSM 28319 / BCRC 17069 / CCUG 31568 / BM 3577 / RP62A), this protein is Uridine kinase.